Reading from the N-terminus, the 633-residue chain is CDK5 and ABL1 enzyme substrate 1 (633 aa).

Residues 1-29 (MAAAAAAATTAACSSGSAGTDAAGASGLQ) show a composition bias toward low complexity. A disordered region spans residues 1-99 (MAAAAAAATT…EGGAAKPGAG (99 aa)). Residues 1–109 (MAAAAAAATT…GACGARTRFS (109 aa)) are interaction with TDRD7. A compositionally biased stretch (basic and acidic residues) spans 51-61 (PPRKPRMDPRR). A phosphoserine mark is found at Ser168 and Ser287. The tract at residues 179–492 (QWQPPRPAPL…TTVIDYVKPS (314 aa)) is interaction with CDK3. Ser313 carries the phosphoserine; by CDK2 and CDK3 modification. A Phosphothreonine modification is found at Thr415.

The protein belongs to the cyclin family. Found in a complex with p53/TP53. Found in a number of complexes with CDK2, CDK3, CDK5, ABL1, TDRD7, CDK17, CCNA1, CCNE1 and TP73. Interacts with CDK2, CDK3, CDK5, ABL1 and TDRD7. Post-translationally, phosphorylated on Ser-313 by CCNE1/CDK3. Phosphorylated on serine/threonine residues by CDK5 and on tyrosine residues by ABL1. Also phosphorylated in vitro by CCNA1/CDK2, CCNE1/CDK2, CCNA1/CDK3 and CCNE1/CDK3. As to expression, expressed in breast, pancreas, colon, head and neck (at protein level). Strongly decreased in more than half of cases of atypical endometrial hyperplasia and in more than 90% of endometrial cancers.

It is found in the nucleus. The protein localises to the cytoplasm. Cyclin-dependent kinase binding protein. Enhances cyclin-dependent kinase tyrosine phosphorylation by nonreceptor tyrosine kinases, such as that of CDK5 by activated ABL1, which leads to increased CDK5 activity and is critical for neuronal development, and that of CDK2 by WEE1, which leads to decreased CDK2 activity and growth inhibition. Positively affects neuronal outgrowth. Plays a role as a regulator for p53/p73-induced cell death. The chain is CDK5 and ABL1 enzyme substrate 1 (CABLES1) from Homo sapiens (Human).